The chain runs to 101 residues: NADH-quinone oxidoreductase subunit K (101 aa).

A run of 3 helical transmembrane segments spans residues 4-24, 30-50, and 61-81; these read LGHYLTLGAILFALSVIGIFL, IVLLMCIELMLLAVNLNFVAF, and VFVFFILTVAAAESAIGLAIL.

Belongs to the complex I subunit 4L family. In terms of assembly, NDH-1 is composed of 14 different subunits. Subunits NuoA, H, J, K, L, M, N constitute the membrane sector of the complex.

Its subcellular location is the cell inner membrane. It carries out the reaction a quinone + NADH + 5 H(+)(in) = a quinol + NAD(+) + 4 H(+)(out). NDH-1 shuttles electrons from NADH, via FMN and iron-sulfur (Fe-S) centers, to quinones in the respiratory chain. The immediate electron acceptor for the enzyme in this species is believed to be ubiquinone. Couples the redox reaction to proton translocation (for every two electrons transferred, four hydrogen ions are translocated across the cytoplasmic membrane), and thus conserves the redox energy in a proton gradient. The polypeptide is NADH-quinone oxidoreductase subunit K (Leptothrix cholodnii (strain ATCC 51168 / LMG 8142 / SP-6) (Leptothrix discophora (strain SP-6))).